The following is a 261-amino-acid chain: MLYYPHIDPVAFRLGPLKVHWYGLMYLVGFAMAWGLALYRARDPKRHWTAQQVGDLIFYGALGLIIGGRLGYMLFYDFSNFIANPLTLFQVWRGGMSFHGGLIGVIVTTWIFSRRTHKRWMDVTDFVVPLVPLGLAAGRIGNFINGELWGRVTTVPWGMVFPNAGPLPRHPSQLYEFLLEGALLFIVIWWFSAKLRPRFAVSSLFLLCYGLFRFTAEFFRQPDPQLGFVAFGWLTRGQELSLPMIIIGGFALWWAYRHKER.

Transmembrane regions (helical) follow at residues 19-39 (VHWY…LALY), 56-76 (LIFY…MLFY), 92-112 (WRGG…TWIF), 126-146 (FVVP…FING), 173-193 (QLYE…WFSA), 199-219 (FAVS…AEFF), and 227-247 (GFVA…MIII). Residue Arg139 coordinates a 1,2-diacyl-sn-glycero-3-phospho-(1'-sn-glycerol).

Belongs to the Lgt family.

The protein localises to the cell inner membrane. It carries out the reaction L-cysteinyl-[prolipoprotein] + a 1,2-diacyl-sn-glycero-3-phospho-(1'-sn-glycerol) = an S-1,2-diacyl-sn-glyceryl-L-cysteinyl-[prolipoprotein] + sn-glycerol 1-phosphate + H(+). It functions in the pathway protein modification; lipoprotein biosynthesis (diacylglyceryl transfer). In terms of biological role, catalyzes the transfer of the diacylglyceryl group from phosphatidylglycerol to the sulfhydryl group of the N-terminal cysteine of a prolipoprotein, the first step in the formation of mature lipoproteins. The polypeptide is Phosphatidylglycerol--prolipoprotein diacylglyceryl transferase (Coxiella burnetii (strain Dugway 5J108-111)).